A 473-amino-acid chain; its full sequence is Lactate utilization protein B 2 (473 aa).

4Fe-4S ferredoxin-type domains lie at 302–332 (GSEFRSILQCIRCAACVNVCPVYRHVGGHSY) and 351–380 (YDDYKELPYASSLCGACTEACPVKIPLHDL). [4Fe-4S] cluster is bound by residues C311, C314, C317, C321, C364, C367, and C371.

The protein belongs to the LutB/YkgF family.

Is involved in L-lactate degradation and allows cells to grow with lactate as the sole carbon source. Has probably a role as an electron transporter during oxidation of L-lactate. This chain is Lactate utilization protein B 2, found in Bacillus mycoides (strain KBAB4) (Bacillus weihenstephanensis).